We begin with the raw amino-acid sequence, 394 residues long: Elongation factor Tu 2 (394 aa).

A tr-type G domain is found at 10-204 (KPHVNVGTIG…YLDSYIPEPE (195 aa)). The tract at residues 19-26 (GHVDHGKT) is G1. 19–26 (GHVDHGKT) is a binding site for GTP. T26 contacts Mg(2+). Positions 60–64 (GITIN) are G2. The tract at residues 81 to 84 (DCPG) is G3. Residues 81–85 (DCPGH) and 136–139 (NKCD) contribute to the GTP site. The G4 stretch occupies residues 136–139 (NKCD). The tract at residues 174 to 176 (SAL) is G5.

The protein belongs to the TRAFAC class translation factor GTPase superfamily. Classic translation factor GTPase family. EF-Tu/EF-1A subfamily. Monomer.

The protein resides in the cytoplasm. It catalyses the reaction GTP + H2O = GDP + phosphate + H(+). Its function is as follows. GTP hydrolase that promotes the GTP-dependent binding of aminoacyl-tRNA to the A-site of ribosomes during protein biosynthesis. The polypeptide is Elongation factor Tu 2 (Serratia proteamaculans (strain 568)).